The primary structure comprises 295 residues: uncharacterized protein (295 aa).

Positions 1–19 are cleaved as a signal peptide; the sequence is MHKLLLIITVFFTFNVAQA.

This is an uncharacterized protein from Rickettsia prowazekii (strain Madrid E).